The chain runs to 970 residues: mRNA-decapping enzyme subunit 2 (970 aa).

The region spanning 101-228 is the Nudix hydrolase domain; sequence KSIPVRGAAI…IKYYLINSMM (128 aa). Phosphoserine is present on serine 116. Positions 134 to 155 match the Nudix box motif; sequence GKISKDENDIDCCIREVKEEIG. Mn(2+) contacts are provided by glutamate 149 and glutamate 153. Disordered stretches follow at residues 287-341, 417-465, and 499-692; these read NNAV…ANNK, AVSQ…PKLK, and PTSS…LSST. Basic and acidic residues predominate over residues 300 to 314; sequence EHQHLKEQSGEHNQQ. Low complexity predominate over residues 315-334; sequence KDQQSSFSSQQQPSIFPSLS. Serine 439 carries the post-translational modification Phosphoserine. Positions 499 to 522 are enriched in polar residues; sequence PTSSQKTHASKPDTSFLPNDSVSG. Acidic residues predominate over residues 526–539; that stretch reads AEYEDFESSSDEEV. Positions 560 to 576 are enriched in basic and acidic residues; that stretch reads SEKDSRRSQKEKPRSDA. Over residues 577–590 the composition is skewed to polar residues; sequence NKTNLNASAESNSV. A compositionally biased stretch (low complexity) spans 596-608; the sequence is KSSPSTQSKQNSS. Acidic residues predominate over residues 625–637; that stretch reads DAYEVFESSSDEE. Residue threonine 677 is modified to Phosphothreonine. Over residues 677–691 the composition is skewed to polar residues; the sequence is TESNKSINETVGLSS. Phosphoserine is present on residues serine 679, serine 682, serine 751, serine 771, serine 773, and serine 778. Residues 831–862 are disordered; that stretch reads LKKNNSTGYPRTEGGPSSEMPTSMKRNDATNN.

Belongs to the Nudix hydrolase family. DCP2 subfamily. As to quaternary structure, component of the decapping complex composed of DCP1 and DCP2. Interacts with mRNA, LSM2, LSM4 and LSM8. It depends on Mn(2+) as a cofactor.

It localises to the cytoplasm. Its subcellular location is the P-body. Functionally, catalytic component of the decapping complex necessary for the degradation of mRNAs, both in normal mRNA turnover and in nonsense-mediated mRNA decay. Removes the 7-methyl guanine cap structure from mRNA molecules, yielding a 5'-phosphorylated mRNA fragment and 7m-GDP. Decapping is the major pathway of mRNA degradation in yeast. It occurs through deadenylation, decapping and subsequent 5' to 3' exonucleolytic decay of the transcript body. The chain is mRNA-decapping enzyme subunit 2 (DCP2) from Saccharomyces cerevisiae (strain YJM789) (Baker's yeast).